We begin with the raw amino-acid sequence, 361 residues long: Phosphoserine aminotransferase (361 aa).

Residue Arg-43 coordinates L-glutamate. Pyridoxal 5'-phosphate is bound by residues 77–78 (AS), Trp-103, Thr-153, Asp-173, and Gln-196. Lys-197 is modified (N6-(pyridoxal phosphate)lysine). A pyridoxal 5'-phosphate-binding site is contributed by 238 to 239 (NT).

It belongs to the class-V pyridoxal-phosphate-dependent aminotransferase family. SerC subfamily. Homodimer. It depends on pyridoxal 5'-phosphate as a cofactor.

The protein localises to the cytoplasm. It catalyses the reaction O-phospho-L-serine + 2-oxoglutarate = 3-phosphooxypyruvate + L-glutamate. The enzyme catalyses 4-(phosphooxy)-L-threonine + 2-oxoglutarate = (R)-3-hydroxy-2-oxo-4-phosphooxybutanoate + L-glutamate. It functions in the pathway amino-acid biosynthesis; L-serine biosynthesis; L-serine from 3-phospho-D-glycerate: step 2/3. In terms of biological role, catalyzes the reversible conversion of 3-phosphohydroxypyruvate to phosphoserine and of 3-hydroxy-2-oxo-4-phosphonooxybutanoate to phosphohydroxythreonine. This Bacillus anthracis (strain A0248) protein is Phosphoserine aminotransferase.